The sequence spans 255 residues: MSDYIVVKCGGSMLDQLHDVFFDCIKKLQQKYKVVIVHGGGPEIDAKLKDCNINVEKKDGLRVTPKEVMDIVQMVLCGSTNKKLVMNLQKHNLRAVGCSGCDGKLLQVQPVSEEIGYVGEVRYVETALLKGLINMNYIPVIAPVGINDNEIYNINADTAAAGIAAALSAKELIFITDVDGVLHEGKLLKKTDEFEIVNLIEKGVITGGMIPKVQAALASLKMGVQKVSIVNGTKDFTEVTGECIGTTVTRGVSIA.

Residues 40-41 (GG), Arg62, and Asn153 contribute to the substrate site.

It belongs to the acetylglutamate kinase family. ArgB subfamily.

The protein localises to the cytoplasm. The enzyme catalyses N-acetyl-L-glutamate + ATP = N-acetyl-L-glutamyl 5-phosphate + ADP. It participates in amino-acid biosynthesis; L-arginine biosynthesis; N(2)-acetyl-L-ornithine from L-glutamate: step 2/4. Its function is as follows. Catalyzes the ATP-dependent phosphorylation of N-acetyl-L-glutamate. The protein is Acetylglutamate kinase of Bacillus cereus (strain ATCC 10987 / NRS 248).